The chain runs to 129 residues: Protein Turandot A (129 aa).

The N-terminal stretch at 1 to 21 is a signal peptide; the sequence is MNSSTALMCFALLLISPLCMG. The N-linked (GlcNAc...) asparagine glycan is linked to Asn-49.

The protein belongs to the Turandot family. As to expression, expressed in the fat body (at protein level).

It localises to the secreted. Functionally, a humoral factor that plays a role in stress tolerance; gives increased resistance to the lethal effects of bacterial challenge and stress. Regulated by the JAK/STAT pathway and NF-KB-like Relish pathway in the fat body, upd3 in the hemocytes and Mekk1 in response to septic injury and consequent immune response. This chain is Protein Turandot A, found in Drosophila melanogaster (Fruit fly).